The sequence spans 296 residues: Ribosomal RNA small subunit methyltransferase A (296 aa).

6 residues coordinate S-adenosyl-L-methionine: Asn30, Leu32, Gly57, Glu78, Asp103, and Asn128.

This sequence belongs to the class I-like SAM-binding methyltransferase superfamily. rRNA adenine N(6)-methyltransferase family. RsmA subfamily.

The protein localises to the cytoplasm. It carries out the reaction adenosine(1518)/adenosine(1519) in 16S rRNA + 4 S-adenosyl-L-methionine = N(6)-dimethyladenosine(1518)/N(6)-dimethyladenosine(1519) in 16S rRNA + 4 S-adenosyl-L-homocysteine + 4 H(+). Specifically dimethylates two adjacent adenosines (A1518 and A1519) in the loop of a conserved hairpin near the 3'-end of 16S rRNA in the 30S particle. May play a critical role in biogenesis of 30S subunits. This is Ribosomal RNA small subunit methyltransferase A from Macrococcus caseolyticus (strain JCSC5402) (Macrococcoides caseolyticum).